A 261-amino-acid chain; its full sequence is MSQSLHLTTRGSVLEIILDRPKANAIDAKTSHEMGEVFMRFRDDPSLRVAIITGAGERFFCAGWDLKAAAEGEAPDADFGAGGFAGLTELFDLNKPVIAAINGYAFGGGFELALAADMIICSDNASFALPEAQLGIVPDSGGVLRLPKRLPPAIVNEMLMTGRRMNAQEALRWGIANRVVSATELMDSARELADQIANSAPLAVAALKEIYRATSELSIEEGYKLMRSGVLKYYPRVLHSEDALEGPLAFAEKRSPEWKGR.

E111 acts as the Nucleophile in catalysis. E131 functions as the Proton acceptor in the catalytic mechanism.

Belongs to the enoyl-CoA hydratase/isomerase family.

It carries out the reaction (R)-carnitinyl-CoA = crotonobetainyl-CoA + H2O. It participates in amine and polyamine metabolism; carnitine metabolism. Its function is as follows. Catalyzes the reversible dehydration of L-carnitinyl-CoA to crotonobetainyl-CoA. This Proteus mirabilis (strain HI4320) protein is Carnitinyl-CoA dehydratase.